The chain runs to 282 residues: MKVITTVKDMQQIAGELRASGKEIGFVPTMGYLHEGHATLLRQAKKENDIVILSVFVNPLQFGPDEDFDRYPRDIKRDERVAKEAGVDYLFYPSVDEMYPAEQTTKIEVVKRTNVLCGKRRPVHFAGVATVLMKLFHITMPTRAYFGMKDAQQVAVVEGIVSDFHIPVTIVPVEIVREADGLAKSSRNVYLSEQERKEAPHLYRSLCIAKQKIEEGERHPRNITTVVKEYIEANTNGIVDYVDIYAYPALTPLEIIKGRIILAIAVQFKNARLIDNITLTVQ.

30 to 37 (MGYLHEGH) contributes to the ATP binding site. His-37 (proton donor) is an active-site residue. Position 61 (Gln-61) interacts with (R)-pantoate. Residue Gln-61 participates in beta-alanine binding. 147-150 (GMKD) provides a ligand contact to ATP. Gln-153 contacts (R)-pantoate. Residues Val-176 and 184–187 (KSSR) each bind ATP.

Belongs to the pantothenate synthetase family. Homodimer.

It localises to the cytoplasm. It carries out the reaction (R)-pantoate + beta-alanine + ATP = (R)-pantothenate + AMP + diphosphate + H(+). Its pathway is cofactor biosynthesis; (R)-pantothenate biosynthesis; (R)-pantothenate from (R)-pantoate and beta-alanine: step 1/1. In terms of biological role, catalyzes the condensation of pantoate with beta-alanine in an ATP-dependent reaction via a pantoyl-adenylate intermediate. The chain is Pantothenate synthetase from Bacillus cytotoxicus (strain DSM 22905 / CIP 110041 / 391-98 / NVH 391-98).